Reading from the N-terminus, the 440-residue chain is MAVKLGTLLLALALGLAQPASARRKLLVFLLDGFRSDYISDEALESLPGFKEIVSRGVKVDYLTPDFPSLSYPNYYTLMTGRHCEVHQMIGNYMWDPTTNKSFDIGVNKDSLMPLWWNGSEPLWVTLTKAKRKVYMYYWPGCEVEILGVRPTYCLEYKNVPTDINFANAVSDALDSFKSGRADLAAIYHERIDVEGHHYGPASPQRKDALKAVDTVLKYMTKWIQERGLQDRLNVIIFSDHGMTDIFWMDKVIELNKYISLNDLQQVKDRGPVVSLWPAPGKHSEIYNKLSTVEHMTVYEKEAIPSRFYYKKGKFVSPLTLVADEGWFITENREMLPFWMNSTGRREGWQRGWHGYDNELMDMRGIFLAFGPDFKSNFRAAPIRSVDVYNVMCNVVGITPLPNNGSWSRVMCMLKGRASTAPPVWPSHCALALILLFLLA.

An N-terminal signal peptide occupies residues 1 to 22 (MAVKLGTLLLALALGLAQPASA). Residues aspartate 32, serine 71, and asparagine 92 each contribute to the substrate site. Zn(2+) is bound by residues aspartate 32 and serine 71. The active-site Nucleophile is serine 71. Serine 71 carries the post-translational modification Phosphoserine. 2 N-linked (GlcNAc...) asparagine glycosylation sites follow: asparagine 100 and asparagine 118. The cysteines at positions 142 and 154 are disulfide-linked. A substrate-binding site is contributed by aspartate 193. Aspartate 193, histidine 197, aspartate 240, and histidine 241 together coordinate Zn(2+). Histidine 241 contributes to the substrate binding site. Asparagine 341 carries an N-linked (GlcNAc...) asparagine glycan. Position 354 (histidine 354) interacts with substrate. Residue histidine 354 coordinates Zn(2+). Asparagine 404 carries an N-linked (GlcNAc...) asparagine glycan. Residue serine 419 is the site of GPI-anchor amidated serine attachment. Positions 420 to 440 (TAPPVWPSHCALALILLFLLA) are cleaved as a propeptide — removed in mature form.

Belongs to the nucleotide pyrophosphatase/phosphodiesterase family. Homodimer; disulfide-linked. Homotetramer. Requires Zn(2+) as cofactor. In terms of tissue distribution, predominantly expressed in kidney and brain. In the kidney, expressed specifically in the proximal tubules and thin descending limbs of Henle (at protein level).

The protein localises to the cell membrane. The catalysed reaction is sn-glycerol 3-phosphocholine + H2O = phosphocholine + glycerol + H(+). The enzyme catalyses a 1-acyl-sn-glycero-3-phosphocholine + H2O = a 1-acyl-sn-glycerol + phosphocholine + H(+). It carries out the reaction a 1-O-alkyl-sn-glycero-3-phosphocholine + H2O = a 1-O-alkyl-sn-glycerol + phosphocholine + H(+). It catalyses the reaction 1-dodecanoyl-sn-glycero-3-phosphocholine + H2O = 1-dodecanoyl-sn-glycerol + phosphocholine + H(+). The catalysed reaction is 1-hexadecanoyl-sn-glycero-3-phosphocholine + H2O = 1-hexadecanoyl-sn-glycerol + phosphocholine + H(+). The enzyme catalyses 1-(5Z,8Z,11Z,14Z-eicosatetraenoyl)-sn-glycero-3-phosphocholine + H2O = 1-(5Z,8Z,11Z,14Z-eicosatetraenoyl)-sn-glycerol + phosphocholine + H(+). It carries out the reaction 1-tetradecanoyl-sn-glycero-3-phosphocholine + H2O = 1-tetradecanoyl-sn-glycerol + phosphocholine + H(+). It catalyses the reaction sphing-4-enine-phosphocholine + H2O = sphing-4-enine + phosphocholine + H(+). The catalysed reaction is 1-(9Z-octadecenoyl)-sn-glycero-3-phosphocholine + H2O = 1-(9Z-octadecenoyl)-sn-glycerol + phosphocholine + H(+). The enzyme catalyses 1-(9Z,12Z)-octadecadienoyl-sn-glycero-3-phosphocholine + H2O = 1-(9Z,12Z-octadecadienoyl)-sn-glycerol + phosphocholine + H(+). It carries out the reaction glycero-2-phosphocholine + H2O = phosphocholine + glycerol + H(+). With respect to regulation, inhibited by EDTA and EGTA in vitro. Choline-specific glycerophosphodiesterase that hydrolyzes glycerophosphocholine (GPC) and lysophosphatidylcholine (LPC) and contributes to supplying choline to the cells. Has a preference for LPC with short (12:0 and 14:0) or polyunsaturated (18:2 and 20:4) fatty acids. In vitro, hydrolyzes only choline-containing lysophospholipids, such as sphingosylphosphorylcholine (SPC), platelet-activating factor (PAF) and lysoPAF, but not other lysophospholipids. The protein is Glycerophosphocholine cholinephosphodiesterase ENPP6 of Homo sapiens (Human).